The chain runs to 436 residues: Homeobox protein PKNOX1 (436 aa).

The segment covering 1–20 (MMATQTLSIDSYQDGQQMQV) has biased composition (polar residues). The interval 1–49 (MMATQTLSIDSYQDGQQMQVVTELKTEQDPNCSEPDAEGVSPPPVESQT) is disordered. Residues Ser33 and Ser41 each carry the phosphoserine modification. An MEIS N-terminal domain is found at 80–163 (GSEGTTSASF…MNSETLLSGE (84 aa)). The homeobox; TALE-type DNA-binding region spans 259-321 (SKNKRGVLPK…NARRRILQPM (63 aa)). A disordered region spans residues 401 to 436 (AGQSEDESVDSTEEDAGALAPAHISGLVLENSDSLQ). Residues 404-416 (SEDESVDSTEEDA) show a composition bias toward acidic residues.

It belongs to the TALE/MEIS homeobox family. In terms of assembly, interacts with MN1. As to expression, ubiquitous. Isoform 2 is expressed in all examined tissues except in bone marrow.

It localises to the nucleus. In terms of biological role, activates transcription in the presence of PBX1A and HOXA1. The sequence is that of Homeobox protein PKNOX1 from Homo sapiens (Human).